The sequence spans 51 residues: MAGNKPLGKKLRLAKALKQNRRVPMFAIARTKGSVKQHPKMRHWRRNTLKK.

Positions 32–51 (KGSVKQHPKMRHWRRNTLKK) are disordered. Basic residues predominate over residues 33 to 51 (GSVKQHPKMRHWRRNTLKK).

The protein belongs to the eukaryotic ribosomal protein eL39 family.

This is Large ribosomal subunit protein eL39 from Methanococcus vannielii (strain ATCC 35089 / DSM 1224 / JCM 13029 / OCM 148 / SB).